We begin with the raw amino-acid sequence, 31 residues long: Cytochrome b6-f complex subunit 6 (31 aa).

Residues 3–23 (TIISYFGFLLASIIFTLILFI) traverse the membrane as a helical segment.

Belongs to the PetL family. The 4 large subunits of the cytochrome b6-f complex are cytochrome b6, subunit IV (17 kDa polypeptide, PetD), cytochrome f and the Rieske protein, while the 4 small subunits are PetG, PetL, PetM and PetN. The complex functions as a dimer.

The protein localises to the plastid. The protein resides in the chloroplast thylakoid membrane. In terms of biological role, component of the cytochrome b6-f complex, which mediates electron transfer between photosystem II (PSII) and photosystem I (PSI), cyclic electron flow around PSI, and state transitions. PetL is important for photoautotrophic growth as well as for electron transfer efficiency and stability of the cytochrome b6-f complex. The sequence is that of Cytochrome b6-f complex subunit 6 from Abies homolepis (Nikko fir).